The sequence spans 474 residues: Bifunctional protein HldE (474 aa).

A ribokinase region spans residues 1-317; sequence MKLSMPRFDR…RRAVQREQGS (317 aa). 194 to 197 lines the ATP pocket; sequence NLAE. Asp-263 is a catalytic residue. Positions 343 to 474 are cytidylyltransferase; sequence FTNGCFDILH…GIVEKIRRQP (132 aa).

In the N-terminal section; belongs to the carbohydrate kinase PfkB family. This sequence in the C-terminal section; belongs to the cytidylyltransferase family. As to quaternary structure, homodimer.

The enzyme catalyses D-glycero-beta-D-manno-heptose 7-phosphate + ATP = D-glycero-beta-D-manno-heptose 1,7-bisphosphate + ADP + H(+). The catalysed reaction is D-glycero-beta-D-manno-heptose 1-phosphate + ATP + H(+) = ADP-D-glycero-beta-D-manno-heptose + diphosphate. It participates in nucleotide-sugar biosynthesis; ADP-L-glycero-beta-D-manno-heptose biosynthesis; ADP-L-glycero-beta-D-manno-heptose from D-glycero-beta-D-manno-heptose 7-phosphate: step 1/4. The protein operates within nucleotide-sugar biosynthesis; ADP-L-glycero-beta-D-manno-heptose biosynthesis; ADP-L-glycero-beta-D-manno-heptose from D-glycero-beta-D-manno-heptose 7-phosphate: step 3/4. Functionally, catalyzes the phosphorylation of D-glycero-D-manno-heptose 7-phosphate at the C-1 position to selectively form D-glycero-beta-D-manno-heptose-1,7-bisphosphate. In terms of biological role, catalyzes the ADP transfer from ATP to D-glycero-beta-D-manno-heptose 1-phosphate, yielding ADP-D-glycero-beta-D-manno-heptose. The chain is Bifunctional protein HldE from Azotobacter vinelandii (strain DJ / ATCC BAA-1303).